A 353-amino-acid chain; its full sequence is Phospho-N-acetylmuramoyl-pentapeptide-transferase (353 aa).

Transmembrane regions (helical) follow at residues 24 to 44 (LGFF…ILWA), 66 to 86 (TPTM…VLCA), 88 to 108 (LGNL…FVGF), 129 to 149 (FGML…KGLD), 160 to 180 (PLFE…FLST), 192 to 212 (GLAS…VYVA), 229 to 249 (VGEL…FLWY), 256 to 276 (VFMG…NAIV), 281 to 301 (ILLV…ILQV), and 330 to 350 (KVIV…LLSL).

The protein belongs to the glycosyltransferase 4 family. MraY subfamily. It depends on Mg(2+) as a cofactor.

Its subcellular location is the cell inner membrane. The catalysed reaction is UDP-N-acetyl-alpha-D-muramoyl-L-alanyl-gamma-D-glutamyl-meso-2,6-diaminopimeloyl-D-alanyl-D-alanine + di-trans,octa-cis-undecaprenyl phosphate = di-trans,octa-cis-undecaprenyl diphospho-N-acetyl-alpha-D-muramoyl-L-alanyl-D-glutamyl-meso-2,6-diaminopimeloyl-D-alanyl-D-alanine + UMP. It functions in the pathway cell wall biogenesis; peptidoglycan biosynthesis. In terms of biological role, catalyzes the initial step of the lipid cycle reactions in the biosynthesis of the cell wall peptidoglycan: transfers peptidoglycan precursor phospho-MurNAc-pentapeptide from UDP-MurNAc-pentapeptide onto the lipid carrier undecaprenyl phosphate, yielding undecaprenyl-pyrophosphoryl-MurNAc-pentapeptide, known as lipid I. This chain is Phospho-N-acetylmuramoyl-pentapeptide-transferase, found in Helicobacter pylori (strain Shi470).